Consider the following 121-residue polypeptide: Ribosome-binding factor A (121 aa).

This sequence belongs to the RbfA family. In terms of assembly, monomer. Binds 30S ribosomal subunits, but not 50S ribosomal subunits or 70S ribosomes.

Its subcellular location is the cytoplasm. One of several proteins that assist in the late maturation steps of the functional core of the 30S ribosomal subunit. Associates with free 30S ribosomal subunits (but not with 30S subunits that are part of 70S ribosomes or polysomes). Required for efficient processing of 16S rRNA. May interact with the 5'-terminal helix region of 16S rRNA. The polypeptide is Ribosome-binding factor A (Finegoldia magna (strain ATCC 29328 / DSM 20472 / WAL 2508) (Peptostreptococcus magnus)).